Reading from the N-terminus, the 238-residue chain is Sugar fermentation stimulation protein homolog (238 aa).

Belongs to the SfsA family.

The sequence is that of Sugar fermentation stimulation protein homolog from Klebsiella pneumoniae subsp. pneumoniae (strain ATCC 700721 / MGH 78578).